We begin with the raw amino-acid sequence, 352 residues long: [LysW]-L-2-aminoadipate/[LysW]-L-glutamate phosphate reductase (352 aa).

Ser13 to Thr16 provides a ligand contact to NADP(+). Cys153 is an active-site residue. An NADP(+)-binding site is contributed by Asn319.

It belongs to the NAGSA dehydrogenase family. Type 1 subfamily. LysY sub-subfamily.

Its subcellular location is the cytoplasm. The catalysed reaction is [amino-group carrier protein]-C-terminal-N-(1-carboxy-5-oxopentan-1-yl)-L-glutamine + phosphate + NADP(+) = [amino-group carrier protein]-C-terminal-N-(1-carboxy-5-phosphooxy-5-oxopentan-1-yl)-L-glutamine + NADPH + H(+). The enzyme catalyses [amino-group carrier protein]-C-terminal-gamma-(L-glutamyl-5-semialdehyde)-L-glutamate + phosphate + NADP(+) = [amino-group carrier protein]-C-terminal-gamma-(5-phospho-L-glutamyl)-L-glutamate + NADPH + H(+). It participates in amino-acid biosynthesis; L-lysine biosynthesis via AAA pathway; L-lysine from L-alpha-aminoadipate (Thermus route): step 3/5. It functions in the pathway amino-acid biosynthesis; L-arginine biosynthesis. Its function is as follows. Involved in both the arginine and lysine biosynthetic pathways. This is [LysW]-L-2-aminoadipate/[LysW]-L-glutamate phosphate reductase from Saccharolobus solfataricus (strain ATCC 35092 / DSM 1617 / JCM 11322 / P2) (Sulfolobus solfataricus).